The following is a 131-amino-acid chain: Fumarate reductase subunit C (131 aa).

Helical transmembrane passes span 30–50 (EGTAVPAVWFSIELIFGLFAL), 63–83 (FLQNPVIVIINLITLAAALLH), and 109–129 (IIKSLWAVTVVATIVILFVAL).

It belongs to the FrdC family. Part of an enzyme complex containing four subunits: a flavoprotein (FrdA), an iron-sulfur protein (FrdB), and two hydrophobic anchor proteins (FrdC and FrdD).

Its subcellular location is the cell inner membrane. Its function is as follows. Two distinct, membrane-bound, FAD-containing enzymes are responsible for the catalysis of fumarate and succinate interconversion; fumarate reductase is used in anaerobic growth, and succinate dehydrogenase is used in aerobic growth. Anchors the catalytic components of the fumarate reductase complex to the cell inner membrane, binds quinones. In Shigella boydii serotype 18 (strain CDC 3083-94 / BS512), this protein is Fumarate reductase subunit C.